The following is a 521-amino-acid chain: 2-isopropylmalate synthase (521 aa).

Residues 12–274 (VIIFDTTLRD…WNKIDTTMLT (263 aa)) form the Pyruvate carboxyltransferase domain. Mn(2+) contacts are provided by D21, H209, H211, and N245. Residues 398–521 (KLLSLTVIAG…DLPVPEAAAS (124 aa)) are regulatory domain.

This sequence belongs to the alpha-IPM synthase/homocitrate synthase family. LeuA type 1 subfamily. In terms of assembly, homodimer. It depends on Mn(2+) as a cofactor.

The protein resides in the cytoplasm. The enzyme catalyses 3-methyl-2-oxobutanoate + acetyl-CoA + H2O = (2S)-2-isopropylmalate + CoA + H(+). It functions in the pathway amino-acid biosynthesis; L-leucine biosynthesis; L-leucine from 3-methyl-2-oxobutanoate: step 1/4. Catalyzes the condensation of the acetyl group of acetyl-CoA with 3-methyl-2-oxobutanoate (2-ketoisovalerate) to form 3-carboxy-3-hydroxy-4-methylpentanoate (2-isopropylmalate). The chain is 2-isopropylmalate synthase from Rhodopseudomonas palustris (strain BisB18).